Here is a 529-residue protein sequence, read N- to C-terminus: Transcription factor kayak (529 aa).

The span at 118–134 (LQGTDSDNSNASWADAQ) shows a compositional bias: polar residues. Disordered regions lie at residues 118-166 (LQGT…SVNG) and 180-239 (NAGR…CRKR). Low complexity-rich tracts occupy residues 142 to 153 (TDTSSAHTDSTS) and 182 to 201 (GRGS…TPAR). A bZIP domain is found at 219–282 (EEKRRIRRER…NQLEFFLRAH (64 aa)). A basic motif region spans residues 221-240 (KRRIRRERNKQAAARCRKRR). The tract at residues 247 to 275 (LTYEVEQLEKKRDGLKKEMETLTDVKNQL) is leucine-zipper. 2 disordered regions span residues 311 to 390 (AGSC…PMST) and 493 to 529 (DGGT…LVSL). The span at 315-332 (DSGSSSHHNNNSNDSSNG) shows a compositional bias: low complexity. The segment covering 340 to 350 (SLNSTGRSNSP) has biased composition (polar residues). Ser349 bears the Phosphoserine mark. Residues 363 to 375 (DGGLDSSCLLDQD) are compositionally biased toward low complexity. The span at 376 to 387 (GPPPSKRFPLPP) shows a compositional bias: pro residues.

This sequence belongs to the bZIP family. Fos subfamily. As to quaternary structure, homodimer. Heterodimer with Jra. The kay-Jra heterodimer binds more stably to the AP-1 site than either of the two proteins alone.

Its subcellular location is the nucleus. In terms of biological role, developmentally regulated transcription factor AP-1 binds and recognizes the enhancer DNA sequence: 5'-TGA[CG]TCA-3'. May play a role in the function or determination of a particular subset of cells in the developing embryo. Is able to carry out its function either independently of or in conjunction with Jra. This chain is Transcription factor kayak, found in Drosophila ananassae (Fruit fly).